A 353-amino-acid chain; its full sequence is UDP-3-O-acylglucosamine N-acyltransferase (353 aa).

H246 (proton acceptor) is an active-site residue.

The protein belongs to the transferase hexapeptide repeat family. LpxD subfamily. As to quaternary structure, homotrimer.

It catalyses the reaction a UDP-3-O-[(3R)-3-hydroxyacyl]-alpha-D-glucosamine + a (3R)-hydroxyacyl-[ACP] = a UDP-2-N,3-O-bis[(3R)-3-hydroxyacyl]-alpha-D-glucosamine + holo-[ACP] + H(+). It functions in the pathway bacterial outer membrane biogenesis; LPS lipid A biosynthesis. Functionally, catalyzes the N-acylation of UDP-3-O-acylglucosamine using 3-hydroxyacyl-ACP as the acyl donor. Is involved in the biosynthesis of lipid A, a phosphorylated glycolipid that anchors the lipopolysaccharide to the outer membrane of the cell. The polypeptide is UDP-3-O-acylglucosamine N-acyltransferase (Chlorobaculum tepidum (strain ATCC 49652 / DSM 12025 / NBRC 103806 / TLS) (Chlorobium tepidum)).